A 1083-amino-acid polypeptide reads, in one-letter code: MFSFEGDFKTRPKVSLGGASRKEEKASLLHRTQEERRKREEERRRLKNAVIIQSFIRGYRDRKQQYFIQRSAFDQCTDSAQPGGTFCLADGPNLTLLVRQLLFFYKQSEDSKRLIWLYQNLIKHSSLFVKQLDGSERLTCLFQIKRLMSLCCRLLQNCSDDSLNVALPMRMLEVFTSENTYLPVLQDSSYVVSVIEQILHYMVHSGYYRSLYLLINSKLPSSIEYSDLSRVPIAKILLENVLKPLHFTYSSCPEASRHQVFSAFTEEFLGAPFTDQIFHFVIPAFADAQTVFPYEPFLNALLLLESQSSKRCSGVPWLFYFVLTVGENYLGALSEDGLLVYLRVLQTFLSQLPASPTGTGCPDSTSDSEDDNEETDQPNSPEDGRVSAPYITEECLRKLDTKQQTNTLLNLVWRDSASEEVFTRMASICHTLMVQHRMMVPKVRLLYSLAFNARFLRHLWFLISSMTTQMITGSMVPLLQLISRGSPMSFEDSSRIIPLFYLFSSLFSHSLISIHDNEFFGDPIEVVGQRQSSMMPFTLEELILLSRCLRDACLGIIKLAYPETKPEVREEYVTAFQSIGVTTNSEMQQCIQMEQKRWVQLFKVITNLVKMLKSRDTRRNFCPPNHWLSEQEDIKADKVTQLYVPASRHVWRFRRMGRIGPLQSTLEVGLESLPLSVSEERQLAILTELPFVVPFEERVKIFQRLIYADKQEVQGDGPFLDGINVTIRRNYIYEDAYDKLSPENEPDLKKRIRVHLLNAHGLDEAGIDGGGIFREFLNELLKSGFNPNQGFFKTTNEGLLYPNPAAQMLVGDSFARHYYFLGRMLGKALYENMLVELPFAGFFLSKLLGTSADVDIHHLASLDPEVYRNLLFLKSYEEDVEELGLNFTVVNNDLGEAQVVELKFGGKDIPVTGANRIAYIHLVADYRLNKQIRPHCLAFRQGLANVVSLEWLRMFDQQEIQVLISGAQVPVSLEDLKSFTNYSGGYSADHPVIKIFWRVVEGFTDEEKRKLLKFVTSCSRPPLLGFKELYPAFCIHNGGSDLERLPTASTCMNLLKLPEFYDEALLRSKLLYAIECAAGFELS.

Composition is skewed to basic and acidic residues over residues 1-10 (MFSFEGDFKT) and 20-40 (SRKEEKASLLHRTQEERRKRE). The tract at residues 1–40 (MFSFEGDFKTRPKVSLGGASRKEEKASLLHRTQEERRKRE) is disordered. Positions 1-60 (MFSFEGDFKTRPKVSLGGASRKEEKASLLHRTQEERRKREEERRRLKNAVIIQSFIRGYR) are cis-determinant of acceptor ubiquitin-binding. The 30-residue stretch at 45 to 74 (RLKNAVIIQSFIRGYRDRKQQYFIQRSAFD) folds into the IQ domain. The disordered stretch occupies residues 354 to 386 (ASPTGTGCPDSTSDSEDDNEETDQPNSPEDGRV). Positions 366 to 376 (SDSEDDNEETD) are enriched in acidic residues. Residues 744–1083 (NEPDLKKRIR…IECAAGFELS (340 aa)) form the HECT domain. Lys-903 is covalently cross-linked (Glycyl lysine isopeptide (Lys-Gly) (interchain with G-Cter in ubiquitin); by autocatalysis). The active-site Glycyl thioester intermediate is the Cys-1051.

Belongs to the UBE3C family. Interacts with 26S proteasomes. Interacts (via the HECT domain) with UBE2D1 and, less efficiently, with UBE2L3. In terms of processing, autoubiquitinated; promoting its own degradation.

It carries out the reaction S-ubiquitinyl-[E2 ubiquitin-conjugating enzyme]-L-cysteine + [acceptor protein]-L-lysine = [E2 ubiquitin-conjugating enzyme]-L-cysteine + N(6)-ubiquitinyl-[acceptor protein]-L-lysine.. It participates in protein modification; protein ubiquitination. Its function is as follows. E3 ubiquitin-protein ligase that specifically catalyzes 'Lys-29'- and 'Lys-48'-linked polyubiquitin chains. Accepts ubiquitin from the E2 ubiquitin-conjugating enzyme UBE2D1 in the form of a thioester and then directly transfers the ubiquitin to targeted substrates. Associates with the proteasome and promotes elongation of ubiquitin chains on substrates bound to the 26S proteasome. Also catalyzes 'Lys-29'- and 'Lys-48'-linked ubiquitination of 26S proteasome subunit ADRM1/RPN13 in response to proteotoxic stress, impairing the ability of the proteasome to bind and degrade ubiquitin-conjugated proteins. Acts as a negative regulator of autophagy by mediating 'Lys-29'- and 'Lys-48'-linked ubiquitination of PIK3C3/VPS34, promoting its degradation. Can assemble unanchored poly-ubiquitin chains in either 'Lys-29'- or 'Lys-48'-linked polyubiquitin chains; with some preference for 'Lys-48' linkages. Acts as a negative regulator of type I interferon by mediating 'Lys-48'-linked ubiquitination of IRF3 and IRF7, leading to their degradation by the proteasome. Catalyzes ubiquitination and degradation of CAND2. The sequence is that of Ubiquitin-protein ligase E3C from Mus musculus (Mouse).